Here is a 102-residue protein sequence, read N- to C-terminus: MSSPPEGKLETKAGHPPAVKAGGMRIVQKHPHTGDTKEEKDKDDQEWESPSPPKPTVFISGVIARGDKDFPPAAAQVAHQKPHASMDKHPSPRTQHIQQPRK.

The segment at 1 to 102 (MSSPPEGKLE…RTQHIQQPRK (102 aa)) is disordered. Position 2 is an N-acetylserine (Ser2). Phosphoserine; by MTOR is present on Ser3. Lys29 bears the N6-acetyllysine mark. The span at 32–43 (HTGDTKEEKDKD) shows a compositional bias: basic and acidic residues. At Ser49 the chain carries Phosphoserine. Ser51 is subject to Phosphoserine; by MTOR. Residue Ser91 is modified to Phosphoserine. Residues 92–102 (PRTQHIQQPRK) show a composition bias toward polar residues.

Belongs to the DAP-DAPL1 family. Associates with ribosomes; inhibiting translation. Interacts with eiF5a (EIF5A and EIF5A2); inhibiting translation. In terms of processing, phosphorylated. Phosphorylation by MTOR inhibits the suppressive activity of DAP toward autophagy.

In terms of biological role, ribosome-binding protein involved in ribosome hibernation, a process during which ribosomes are stabilized in an inactive state and preserved from proteasomal degradation. Acts via its association with eiF5a (EIF5A and EIF5A2) at the polypeptide exit tunnel of the ribosome, preventing mRNA translation. Involved in ribosome hibernation in the mature oocyte by preventing mRNA translation, leading to ribosome inactivation. Ribosomes, which are produced in large quantities during oogenesis, are stored and translationally repressed in the oocyte and early embryo. Also acts as a negative regulator of autophagy. Involved in mediating interferon-gamma-induced cell death. This Homo sapiens (Human) protein is Death-associated protein 1.